The following is a 339-amino-acid chain: Uroporphyrinogen decarboxylase (339 aa).

Residues 23–27 (RQAGR), Asp72, Tyr147, Thr202, and His315 each bind substrate.

The protein belongs to the uroporphyrinogen decarboxylase family. Homodimer.

The protein resides in the cytoplasm. The enzyme catalyses uroporphyrinogen III + 4 H(+) = coproporphyrinogen III + 4 CO2. It functions in the pathway porphyrin-containing compound metabolism; protoporphyrin-IX biosynthesis; coproporphyrinogen-III from 5-aminolevulinate: step 4/4. Functionally, catalyzes the decarboxylation of four acetate groups of uroporphyrinogen-III to yield coproporphyrinogen-III. The sequence is that of Uroporphyrinogen decarboxylase from Citrifermentans bemidjiense (strain ATCC BAA-1014 / DSM 16622 / JCM 12645 / Bem) (Geobacter bemidjiensis).